The chain runs to 358 residues: MATH domain and coiled-coil domain-containing protein At3g58440 (358 aa).

Positions 8-131 (QDKFTWVLEK…NDRLTIVAEV (124 aa)) constitute an MATH domain. Positions 250 to 309 (LRDAGFKVDWLEKKLDQLKEKKEEEMSGLARLHEIEERLQKLKLLFVDLESQLQKEKVEA) form a coiled coil.

In Arabidopsis thaliana (Mouse-ear cress), this protein is MATH domain and coiled-coil domain-containing protein At3g58440.